Reading from the N-terminus, the 156-residue chain is MPRKGPVAKRDVLPDPLYNSKLVTRLINKMMIDGKKGKAQTILYKSFDIIKERTGNDAMEVFEQALKNIMPVLEVKARRVGGANYQVPVEVRPERRTTLGLRWLVNYARLRGEKTMEERLANEILDAANNTGAAVKKREDTHKMAEANKAFAHYRW.

It belongs to the universal ribosomal protein uS7 family. As to quaternary structure, part of the 30S ribosomal subunit. Contacts proteins S9 and S11.

In terms of biological role, one of the primary rRNA binding proteins, it binds directly to 16S rRNA where it nucleates assembly of the head domain of the 30S subunit. Is located at the subunit interface close to the decoding center, probably blocks exit of the E-site tRNA. In Bacillus licheniformis (strain ATCC 14580 / DSM 13 / JCM 2505 / CCUG 7422 / NBRC 12200 / NCIMB 9375 / NCTC 10341 / NRRL NRS-1264 / Gibson 46), this protein is Small ribosomal subunit protein uS7.